The sequence spans 284 residues: Diaminopimelate epimerase (284 aa).

Residues asparagine 20, glutamine 53, and asparagine 73 each contribute to the substrate site. Cysteine 82 acts as the Proton donor in catalysis. Substrate-binding positions include 83-84 (GN), asparagine 167, asparagine 200, and 218-219 (ER). Cysteine 227 serves as the catalytic Proton acceptor. 228 to 229 (GS) is a substrate binding site.

Belongs to the diaminopimelate epimerase family. In terms of assembly, homodimer.

Its subcellular location is the cytoplasm. The enzyme catalyses (2S,6S)-2,6-diaminopimelate = meso-2,6-diaminopimelate. Its pathway is amino-acid biosynthesis; L-lysine biosynthesis via DAP pathway; DL-2,6-diaminopimelate from LL-2,6-diaminopimelate: step 1/1. Its function is as follows. Catalyzes the stereoinversion of LL-2,6-diaminopimelate (L,L-DAP) to meso-diaminopimelate (meso-DAP), a precursor of L-lysine and an essential component of the bacterial peptidoglycan. This is Diaminopimelate epimerase from Xanthomonas oryzae pv. oryzae (strain MAFF 311018).